The chain runs to 209 residues: Dual-specificity protein phosphatase SDP1 (209 aa).

Over residues 1–11 (MNIYTSPTRTP) the composition is skewed to polar residues. The disordered stretch occupies residues 1 to 43 (MNIYTSPTRTPNIAPKSGQRPSLPMLATDERSTDKESPNEDRE). A compositionally biased stretch (basic and acidic residues) spans 28–43 (TDERSTDKESPNEDRE). A disulfide bridge connects residues Cys47 and Cys142. One can recognise a Tyrosine-protein phosphatase domain in the interval 59 to 196 (GPLLVLPEKI…LMEWEVALNA (138 aa)). A 4-O-phospho-L-tyrosine-binding site is contributed by His111. Residue Cys140 is the Phosphocysteine intermediate of the active site.

This sequence belongs to the protein-tyrosine phosphatase family. Non-receptor class dual specificity subfamily.

The enzyme catalyses O-phospho-L-tyrosyl-[protein] + H2O = L-tyrosyl-[protein] + phosphate. Its function is as follows. Mediates dephosphorylation of MAPK substrates such as SLT2, acquiring enhanced catalytic activity under oxidative conditions. In Saccharomyces cerevisiae (strain ATCC 204508 / S288c) (Baker's yeast), this protein is Dual-specificity protein phosphatase SDP1 (SDP1).